Here is a 297-residue protein sequence, read N- to C-terminus: Phosphatidylinositol N-acetylglucosaminyltransferase subunit C (297 aa).

A run of 4 helical transmembrane segments spans residues valine 67–glycine 87, threonine 88–glycine 108, alanine 153–valine 173, and alanine 239–phenylalanine 259.

It belongs to the PIGC family. As to quaternary structure, component of the glycosylphosphatidylinositol-N-acetylglucosaminyltransferase (GPI-GnT) complex composed at least by PIGA, PIGC, PIGH, PIGP, PIGQ, PIGY and DPM2. Interacts with PIGQ. Interacts with the heterodimer PIGA:PIGH.

It is found in the endoplasmic reticulum membrane. It participates in glycolipid biosynthesis; glycosylphosphatidylinositol-anchor biosynthesis. In terms of biological role, part of the glycosylphosphatidylinositol-N-acetylglucosaminyltransferase (GPI-GnT) complex that catalyzes the transfer of N-acetylglucosamine from UDP-N-acetylglucosamine to phosphatidylinositol and participates in the first step of GPI biosynthesis. In Mus musculus (Mouse), this protein is Phosphatidylinositol N-acetylglucosaminyltransferase subunit C.